A 152-amino-acid chain; its full sequence is Diamine acetyltransferase (152 aa).

In terms of domain architecture, N-acetyltransferase spans 5-152; that stretch reads FEVRKATIDD…SFLDLTPKSD (148 aa). Tyr-127 serves as the catalytic Proton donor.

The protein belongs to the acetyltransferase family. As to quaternary structure, homotetramer.

It is found in the cytoplasm. The enzyme catalyses an alkane-alpha,omega-diamine + acetyl-CoA = an N-acetylalkane-alpha,omega-diamine + CoA + H(+). Its pathway is amine and polyamine degradation; putrescine degradation; N-acetylputrescine from putrescine: step 1/1. Enzyme which catalyzes the acetylation of polyamines. Displays higher substrate specificity for spermine than for spermidine. May function to acetylate host-derived polyamines, thus alleviating the necessity for de novo synthesis of these molecules. This is Diamine acetyltransferase from Cryptosporidium parvum (strain Iowa II).